We begin with the raw amino-acid sequence, 75 residues long: Notewaprin-b (75 aa).

Positions 1–24 (MSSGGLLLLLGLLTLWAELTPVSS) are cleaved as a signal peptide. The WAP domain occupies 27–72 (RPKKPGLCPPRPQKPPCVRECKNDWICPGEQKCCRYGCIYECRDPI). 4 disulfide bridges follow: C34–C60, C43–C64, C47–C59, and C53–C68.

The protein belongs to the venom waprin family. As to expression, expressed by the venom gland.

It localises to the secreted. In terms of biological role, damages membranes of susceptible bacteria. Has no hemolytic activity. Not toxic to mice. Does not inhibit the proteinases elastase and cathepsin G. The chain is Notewaprin-b from Notechis scutatus scutatus (Mainland tiger snake).